Here is a 704-residue protein sequence, read N- to C-terminus: Glycogen [starch] synthase, liver (704 aa).

The residue at position 8 (S8) is a Phosphoserine; by AMPK and PKA. The residue at position 11 (S11) is a Phosphoserine. K40 lines the UDP pocket. H205 and R211 together coordinate UDP-alpha-D-glucose. Alpha-D-glucose 6-phosphate is bound by residues H291, E292, Q294, H297, and K301. Position 331 (R331) interacts with UDP. R331 contacts UDP-alpha-D-glucose. Residue H501 participates in alpha-D-glucose 6-phosphate binding. Residues E510, W512, and G513 each contribute to the UDP-alpha-D-glucose site. T515 is a UDP binding site. Residues R582 and R586 each contribute to the alpha-D-glucose 6-phosphate site. The interval 620–704 is disordered; sequence KFHLEPTSPP…KKKLHGEYKN (85 aa). S627 carries the phosphoserine modification. A phosphoserine; by GSK3-alpha and GSK3-beta mark is found at S641, S645, S649, and S653. Positions 647 to 657 are enriched in low complexity; it reads SGSQASSPQCS. S657 carries the phosphoserine; by CK2 modification. The segment covering 658-675 has biased composition (acidic residues); that stretch reads DAEDEEDEDERYDEEEEA. Phosphoserine is present on S684.

This sequence belongs to the glycosyltransferase 3 family. As to quaternary structure, part of the glycogen synthase (GS)-glycogenin complex, a heterooctamer composed of a tetramer of GS and 2 dimers of glycogenin, where each GS protomer binds to one glycogenin subunit (via glycogenin C-terminus); the GS tetramer may dissociate from glycogenin dimers to continue glycogen polymerization on its own. May also form a heterooctamer complex with GYG1 (via GYG1 C-terminus). In terms of processing, phosphorylation reduces the activity towards UDP-alpha-D-glucose. Primed phosphorylation at Ser-657 (site 5) by CSNK2A1 and CSNK2A2 is required for inhibitory phosphorylation at Ser-641 (site 3a), Ser-645 (site 3b), Ser-649 (site 3c) and Ser-653 (site 4) by GSK3A an GSK3B. Dephosphorylation at Ser-641 and Ser-645 by PP1 activates the enzyme. Phosphorylation at Ser-8 is not required for interaction with GYG1. Interaction with GYG1 does not regulate the phosphorylation at Ser-8 and Ser-641. In terms of tissue distribution, specifically expressed in liver.

It catalyses the reaction [(1-&gt;4)-alpha-D-glucosyl](n) + UDP-alpha-D-glucose = [(1-&gt;4)-alpha-D-glucosyl](n+1) + UDP + H(+). It functions in the pathway glycan biosynthesis; glycogen biosynthesis. Its activity is regulated as follows. Allosteric activation by glucose-6-phosphate. Phosphorylation reduces the activity towards UDP-glucose. When in the non-phosphorylated state, glycogen synthase does not require glucose-6-phosphate as an allosteric activator; when phosphorylated it does. In terms of biological role, glycogen synthase participates in the glycogen biosynthetic process along with glycogenin and glycogen branching enzyme. Extends the primer composed of a few glucose units formed by glycogenin by adding new glucose units to it. In this context, glycogen synthase transfers the glycosyl residue from UDP-Glc to the non-reducing end of alpha-1,4-glucan. The sequence is that of Glycogen [starch] synthase, liver from Mus musculus (Mouse).